Here is a 118-residue protein sequence, read N- to C-terminus: uncharacterized protein (118 aa).

A run of 2 helical transmembrane segments spans residues 5–25 and 40–57; these read AFFNLIACVLFPTPLIPSMVI and FLTFLTNLFLYNIVQHYI.

The protein localises to the membrane. This is an uncharacterized protein from African swine fever virus (strain Badajoz 1971 Vero-adapted) (Ba71V).